A 153-amino-acid chain; its full sequence is D-aminoacyl-tRNA deacylase (153 aa).

The Gly-cisPro motif, important for rejection of L-amino acids signature appears at 137-138 (GP).

The protein belongs to the DTD family. In terms of assembly, homodimer.

It localises to the cytoplasm. The catalysed reaction is glycyl-tRNA(Ala) + H2O = tRNA(Ala) + glycine + H(+). The enzyme catalyses a D-aminoacyl-tRNA + H2O = a tRNA + a D-alpha-amino acid + H(+). Functionally, an aminoacyl-tRNA editing enzyme that deacylates mischarged D-aminoacyl-tRNAs. Also deacylates mischarged glycyl-tRNA(Ala), protecting cells against glycine mischarging by AlaRS. Acts via tRNA-based rather than protein-based catalysis; rejects L-amino acids rather than detecting D-amino acids in the active site. By recycling D-aminoacyl-tRNA to D-amino acids and free tRNA molecules, this enzyme counteracts the toxicity associated with the formation of D-aminoacyl-tRNA entities in vivo and helps enforce protein L-homochirality. This is D-aminoacyl-tRNA deacylase from Dehalococcoides mccartyi (strain ATCC BAA-2100 / JCM 16839 / KCTC 5957 / BAV1).